The following is a 147-amino-acid chain: Small ribosomal subunit protein bS6 (147 aa).

Residues 96-147 form a disordered region; that stretch reads VTEPSPMMKAKEERFTKRDDREERSDRSEAPRAEAPAKAEAPAKAEDEAAAE. A compositionally biased stretch (basic and acidic residues) spans 104 to 147; sequence KAKEERFTKRDDREERSDRSEAPRAEAPAKAEAPAKAEDEAAAE.

It belongs to the bacterial ribosomal protein bS6 family.

Its function is as follows. Binds together with bS18 to 16S ribosomal RNA. The sequence is that of Small ribosomal subunit protein bS6 from Photobacterium profundum (strain SS9).